The chain runs to 547 residues: Probable FMN/FAD exporter YeeO (547 aa).

Helical transmembrane passes span 94–114, 139–159, 174–194, 211–231, 246–268, 281–301, 318–338, 350–370, 404–424, 439–459, and 486–506; these read ITPLAVPIFMENACVLLMGVL, VIMAFFAAIDLGTTVVVAFSL, SLVIMTLFAVLLATLIHHFGE, LALTYLELTVLSYPAAAITLI, LLINGSLNILNIIISGILIYGLF, GLTISRYIGAVAILWVLAIGF, FSIIWEVMGIGIPASVESVLF, AGMGTSVIAGNFIAFSIAALI, VFWLSTLGLTAIAWLTAPFAG, VVVILIWLNALFMPIWSASWV, and VVVGYVLGIMLGWGVVGVWMG.

It belongs to the multi antimicrobial extrusion (MATE) (TC 2.A.66.1) family.

It localises to the cell inner membrane. A transporter able to export peptides and flavins. When overexpressed allows cells deleted for multiple peptidases (pepA, pepB, pepD and pepN) to grow in the presence of dipeptides Ala-Gln or Gly-Tyr which otherwise inhibit growth. Cells overexpressing this protein have decreased intracellular levels of Ala-Gln dipeptide, and in a system that produces the Ala-Gln dipeptide, overproduction of this protein increases its export. When overexpressed increases secretion of FMN and FAD but not riboflavin; intracellular concentrations of FMN and riboflavin rise, possibly to compensate for increased secretion. Increased overexpression causes slight cell elongation. The chain is Probable FMN/FAD exporter YeeO (yeeO) from Escherichia coli (strain K12).